The chain runs to 392 residues: GDP-mannose transporter (392 aa).

The interval 1–40 is disordered; it reads MANKRNEDIELGPAEGRGSTDKDPFLARRSSSQPNRPQQA. Over 1-55 the chain is Cytoplasmic; it reads MANKRNEDIELGPAEGRGSTDKDPFLARRSSSQPNRPQQAGPFGGYFDKIDHSPG. The span at 29 to 38 shows a compositional bias: polar residues; the sequence is RSSSQPNRPQ. Residues 56 to 76 form a helical membrane-spanning segment; it reads ASIIAYCLSSISMTVVNKYVV. The Lumenal portion of the chain corresponds to 77–80; it reads SGSE. The helical transmembrane segment at 81–101 threads the bilayer; the sequence is WNLNFFYLAVQSLVCTAAILI. Over 102–121 the chain is Cytoplasmic; the sequence is CKQLGMFQNLAAFDSTKAKK. A helical transmembrane segment spans residues 122–144; sequence WFPISLLLVGMIYTSTKALQFLS. Over 145 to 149 the chain is Lumenal; that stretch reads VPVYT. A helical transmembrane segment spans residues 150–168; the sequence is IFKNLTIIVVAYGEVLWFG. Over 169–174 the chain is Cytoplasmic; that stretch reads GSVTPM. A helical transmembrane segment spans residues 175 to 198; that stretch reads ALLSFGLMVLSSVIAAWADIQAAV. Residues 199–213 lie on the Lumenal side of the membrane; it reads EGVGHTAEATDAIST. Residues 214-234 form a helical membrane-spanning segment; that stretch reads LNAGYAWMGMNVFCTAAYLLG. At 235 to 248 the chain is on the cytoplasmic side; that stretch reads MRKVIKKMNFKDYD. The helical transmembrane segment at 249–269 threads the bilayer; it reads TMFYNNLLTIPVLIVFSLLFE. Over 270–287 the chain is Lumenal; sequence DWSNDNLIKNFPVETRNS. Residues 288 to 308 traverse the membrane as a helical segment; it reads LFIGMIYSGLAAIFISYCSAW. The Cytoplasmic portion of the chain corresponds to 309-316; the sequence is CIRVTSST. A helical transmembrane segment spans residues 317 to 337; that stretch reads TYSMVGALNKLPLAISGLIFF. Residues 338 to 342 are Lumenal-facing; the sequence is DAPVT. Residues 343 to 361 form a helical membrane-spanning segment; sequence FGSVTAIFVGFVSGLVYTW. Residues 362–392 are Cytoplasmic-facing; sequence SKTRQKVSQILPTTQPTMSASAASNRDAANA.

This sequence belongs to the TPT transporter family. SLC35D subfamily. Homooligomer.

It localises to the golgi apparatus membrane. Its subcellular location is the cytoplasmic vesicle membrane. The protein localises to the endoplasmic reticulum membrane. Functionally, involved in the import of GDP-mannose from the cytoplasm into the Golgi lumen. The sequence is that of GDP-mannose transporter (vrg-4) from Neurospora crassa (strain ATCC 24698 / 74-OR23-1A / CBS 708.71 / DSM 1257 / FGSC 987).